Reading from the N-terminus, the 201-residue chain is Large ribosomal subunit protein bL25 (201 aa).

The protein belongs to the bacterial ribosomal protein bL25 family. CTC subfamily. As to quaternary structure, part of the 50S ribosomal subunit; part of the 5S rRNA/L5/L18/L25 subcomplex. Contacts the 5S rRNA. Binds to the 5S rRNA independently of L5 and L18.

Functionally, this is one of the proteins that binds to the 5S RNA in the ribosome where it forms part of the central protuberance. The sequence is that of Large ribosomal subunit protein bL25 from Aromatoleum aromaticum (strain DSM 19018 / LMG 30748 / EbN1) (Azoarcus sp. (strain EbN1)).